Consider the following 215-residue polypeptide: RNA pyrophosphohydrolase (215 aa).

Positions 6–149 (GFRPNVGIIL…KRDVYQLALT (144 aa)) constitute a Nudix hydrolase domain. A Nudix box motif is present at residues 38-59 (GGIKYGETPMQAMYRELHEETG).

This sequence belongs to the Nudix hydrolase family. RppH subfamily. A divalent metal cation serves as cofactor.

Its function is as follows. Accelerates the degradation of transcripts by removing pyrophosphate from the 5'-end of triphosphorylated RNA, leading to a more labile monophosphorylated state that can stimulate subsequent ribonuclease cleavage. In Burkholderia lata (strain ATCC 17760 / DSM 23089 / LMG 22485 / NCIMB 9086 / R18194 / 383), this protein is RNA pyrophosphohydrolase.